The following is a 307-amino-acid chain: Elongation factor Ts (307 aa).

The tract at residues 80–83 (TDFV) is involved in Mg(2+) ion dislocation from EF-Tu.

It belongs to the EF-Ts family.

It localises to the cytoplasm. Functionally, associates with the EF-Tu.GDP complex and induces the exchange of GDP to GTP. It remains bound to the aminoacyl-tRNA.EF-Tu.GTP complex up to the GTP hydrolysis stage on the ribosome. This Nitrobacter hamburgensis (strain DSM 10229 / NCIMB 13809 / X14) protein is Elongation factor Ts.